The following is a 293-amino-acid chain: 4-hydroxy-tetrahydrodipicolinate synthase (293 aa).

Thr-44 is a pyruvate binding site. Tyr-132 (proton donor/acceptor) is an active-site residue. Catalysis depends on Lys-161, which acts as the Schiff-base intermediate with substrate. Ile-203 is a binding site for pyruvate.

The protein belongs to the DapA family. In terms of assembly, homotetramer; dimer of dimers.

It is found in the cytoplasm. The catalysed reaction is L-aspartate 4-semialdehyde + pyruvate = (2S,4S)-4-hydroxy-2,3,4,5-tetrahydrodipicolinate + H2O + H(+). It participates in amino-acid biosynthesis; L-lysine biosynthesis via DAP pathway; (S)-tetrahydrodipicolinate from L-aspartate: step 3/4. Functionally, catalyzes the condensation of (S)-aspartate-beta-semialdehyde [(S)-ASA] and pyruvate to 4-hydroxy-tetrahydrodipicolinate (HTPA). The protein is 4-hydroxy-tetrahydrodipicolinate synthase of Sulfurihydrogenibium sp. (strain YO3AOP1).